Here is a 377-residue protein sequence, read N- to C-terminus: UDP-N-acetylglucosamine--N-acetylmuramyl-(pentapeptide) pyrophosphoryl-undecaprenol N-acetylglucosamine transferase (377 aa).

UDP-N-acetyl-alpha-D-glucosamine-binding positions include 29 to 31, Asn142, Arg179, Ser213, and Gln308; that span reads TAG.

Belongs to the glycosyltransferase 28 family. MurG subfamily.

It is found in the cell membrane. The enzyme catalyses di-trans,octa-cis-undecaprenyl diphospho-N-acetyl-alpha-D-muramoyl-L-alanyl-D-glutamyl-meso-2,6-diaminopimeloyl-D-alanyl-D-alanine + UDP-N-acetyl-alpha-D-glucosamine = di-trans,octa-cis-undecaprenyl diphospho-[N-acetyl-alpha-D-glucosaminyl-(1-&gt;4)]-N-acetyl-alpha-D-muramoyl-L-alanyl-D-glutamyl-meso-2,6-diaminopimeloyl-D-alanyl-D-alanine + UDP + H(+). The protein operates within cell wall biogenesis; peptidoglycan biosynthesis. Cell wall formation. Catalyzes the transfer of a GlcNAc subunit on undecaprenyl-pyrophosphoryl-MurNAc-pentapeptide (lipid intermediate I) to form undecaprenyl-pyrophosphoryl-MurNAc-(pentapeptide)GlcNAc (lipid intermediate II). This Saccharopolyspora erythraea (strain ATCC 11635 / DSM 40517 / JCM 4748 / NBRC 13426 / NCIMB 8594 / NRRL 2338) protein is UDP-N-acetylglucosamine--N-acetylmuramyl-(pentapeptide) pyrophosphoryl-undecaprenol N-acetylglucosamine transferase.